The sequence spans 201 residues: Holliday junction branch migration complex subunit RuvA (201 aa).

Positions 1 to 63 (MIAYIKGTLN…EDAQILFGFQ (63 aa)) are domain I. Positions 64–142 (NRDEKYLFTK…SVFSITDEQQ (79 aa)) are domain II. The flexible linker stretch occupies residues 143–149 (KSSVSNV). A domain III region spans residues 150–201 (NNNEVYSEAMEALKALGYTDKEVKQVLPHLKKDNDALSVDEAIRKALALLAK).

Belongs to the RuvA family. Homotetramer. Forms an RuvA(8)-RuvB(12)-Holliday junction (HJ) complex. HJ DNA is sandwiched between 2 RuvA tetramers; dsDNA enters through RuvA and exits via RuvB. An RuvB hexamer assembles on each DNA strand where it exits the tetramer. Each RuvB hexamer is contacted by two RuvA subunits (via domain III) on 2 adjacent RuvB subunits; this complex drives branch migration. In the full resolvosome a probable DNA-RuvA(4)-RuvB(12)-RuvC(2) complex forms which resolves the HJ.

The protein localises to the cytoplasm. In terms of biological role, the RuvA-RuvB-RuvC complex processes Holliday junction (HJ) DNA during genetic recombination and DNA repair, while the RuvA-RuvB complex plays an important role in the rescue of blocked DNA replication forks via replication fork reversal (RFR). RuvA specifically binds to HJ cruciform DNA, conferring on it an open structure. The RuvB hexamer acts as an ATP-dependent pump, pulling dsDNA into and through the RuvAB complex. HJ branch migration allows RuvC to scan DNA until it finds its consensus sequence, where it cleaves and resolves the cruciform DNA. The polypeptide is Holliday junction branch migration complex subunit RuvA (Oceanobacillus iheyensis (strain DSM 14371 / CIP 107618 / JCM 11309 / KCTC 3954 / HTE831)).